The chain runs to 231 residues: Killer cell lectin-like receptor subfamily F member 1 (231 aa).

The Cytoplasmic segment spans residues 1–38; it reads MQDEERYMTLNVQSKKRSSAQTSQLTFKDYSVTLHWYK. Position 7 is a phosphotyrosine (Tyr7). The helical; Signal-anchor for type II membrane protein transmembrane segment at 39 to 59 threads the bilayer; that stretch reads ILLGISGTVNGILTLTLISLI. The Extracellular segment spans residues 60-231; it reads LLVSQGVLLK…SSVFKWICQY (172 aa). 4 N-linked (GlcNAc...) asparagine glycosylation sites follow: Asn77, Asn91, Asn96, and Asn176. A C-type lectin domain is found at 121 to 230; sequence YQGKCYWFSN…CSSVFKWICQ (110 aa). Disulfide bonds link Cys142–Cys229 and Cys208–Cys221.

In terms of assembly, homodimer. Interacts with CLEC2B. Post-translationally, phosphorylated on Tyr-7; this phosphorylation is required for NKp80/KLRF1-mediated cytotoxicity. As to expression, strongly expressed in peripheral blood leukocytes and spleen, with weaker expression in lymph node and adult liver, and no expression detected in bone marrow, thymus, and fetal liver. Not expressed in brain, heart, placenta, lung, kidney, skeletal muscle, and pancreas. Within peripheral blood leukocyte and immunocyte cell lines, expression was predominant in NK cells but was also detected in monocytes.

The protein localises to the membrane. Functions as an activating receptor involved in immunosurveillance upon binding to various ligands displayed at the surface of myeloid cells. Upon interaction with CLEC2B ligand, stimulates NK-cell cytotoxicity and cytokine production leading to the cytolysis of malignant CLEC2B-expressing myeloid cells. Actviation of the common cytotoxicity pathway involves SRC and SYK kinases. The polypeptide is Killer cell lectin-like receptor subfamily F member 1 (KLRF1) (Homo sapiens (Human)).